Here is a 598-residue protein sequence, read N- to C-terminus: Auxin response factor 22 (598 aa).

A DNA-binding region (TF-B3) is located at residues 124-226 (NSFTKVLTAS…ELRVGIRRAG (103 aa)). In terms of domain architecture, PB1 spans 509-590 (RTCTKVQMQG…MVKKILIFKR (82 aa)).

It belongs to the ARF family. As to quaternary structure, homodimers and heterodimers.

It is found in the nucleus. In terms of biological role, auxin response factors (ARFs) are transcriptional factors that bind specifically to the DNA sequence 5'-TGTCTC-3' found in the auxin-responsive promoter elements (AuxREs). Could act as transcriptional activator or repressor. Formation of heterodimers with Aux/IAA proteins may alter their ability to modulate early auxin response genes expression. The polypeptide is Auxin response factor 22 (ARF22) (Arabidopsis thaliana (Mouse-ear cress)).